Reading from the N-terminus, the 351-residue chain is Cytochrome c biogenesis protein CcsA (351 aa).

The next 8 membrane-spanning stretches (helical) occupy residues 17–37 (VLFL…LPAI), 38–58 (NALG…LLGA), 68–88 (LSNL…VHLI), 97–117 (LVGV…TLTL), 143–163 (MMLS…FLVI), 259–279 (IIGL…VWAN), 286–306 (WSWD…AAYL), and 320–340 (AILA…VNLL).

Belongs to the CcmF/CycK/Ccl1/NrfE/CcsA family. In terms of assembly, may interact with ccs1.

It is found in the cellular thylakoid membrane. Functionally, required during biogenesis of c-type cytochromes (cytochrome c6 and cytochrome f) at the step of heme attachment. The protein is Cytochrome c biogenesis protein CcsA of Trichormus variabilis (strain ATCC 29413 / PCC 7937) (Anabaena variabilis).